Here is a 680-residue protein sequence, read N- to C-terminus: Dipeptidyl carboxypeptidase (680 aa).

Histidine 469 provides a ligand contact to Zn(2+). Glutamate 470 is an active-site residue. The Zn(2+) site is built by histidine 473 and histidine 476.

This sequence belongs to the peptidase M3 family. Requires Zn(2+) as cofactor.

It is found in the cytoplasm. It carries out the reaction Hydrolysis of unblocked, C-terminal dipeptides from oligopeptides, with broad specificity. Does not hydrolyze bonds in which P1' is Pro, or both P1 and P1' are Gly.. Removes dipeptides from the C-termini of N-blocked tripeptides, tetrapeptides and larger peptides. This chain is Dipeptidyl carboxypeptidase (dcp), found in Salmonella typhimurium (strain LT2 / SGSC1412 / ATCC 700720).